The primary structure comprises 70 residues: Small ribosomal subunit protein bS21 (70 aa).

This sequence belongs to the bacterial ribosomal protein bS21 family.

This is Small ribosomal subunit protein bS21 from Nitrosomonas eutropha (strain DSM 101675 / C91 / Nm57).